Here is a 334-residue protein sequence, read N- to C-terminus: Procathepsin L (334 aa).

Residues 1–17 form the signal peptide; sequence MNLLLLLAVLCLGTALA. The propeptide at 18–113 is activation peptide; that stretch reads TPKFDQTFSA…RLFQEPLMLK (96 aa). E122 lines the Zn(2+) pocket. Disulfide bonds link C135/C178 and C169/C211. C138 is an active-site residue. The Zn(2+) site is built by E163, D184, E199, and E205. Residue N221 is glycosylated (N-linked (GlcNAc...) (high mannose) asparagine). Zn(2+)-binding residues include D227, D250, H253, and D275. An intrachain disulfide couples C269 to C322. H276 is a catalytic residue. The propeptide occupies 289–290; sequence DS. N300 is a catalytic residue.

It belongs to the peptidase C1 family. In terms of assembly, dimer of a heavy and a light chain linked by disulfide bonds. Interacts with Long isoform of CD74/Ii chain; the interaction stabilizes the conformation of mature CTSL. In terms of processing, during export along the endocytic pathway, pro-CTSL undergoes several proteolytic cleavages to generate the CTSL single-chain and two-chain mature forms, composed of a heavy chain linked to a light chain by disulfide bonds. Autocleavage; produces the single-chain CTSL after cleavage of the propeptide. The cleavage can be intermolecular. In terms of tissue distribution, expressed in thymus, kidney and liver. Expressed in thyroid epithelial cells. Expressed in cortical thymic epithelial cells. Expressed by antigen presenting cells (APCs) such as dendritic cells and macrophages.

It localises to the lysosome. The protein resides in the apical cell membrane. Its subcellular location is the secreted. The protein localises to the extracellular space. It is found in the cytoplasmic vesicle. It localises to the secretory vesicle. The protein resides in the chromaffin granule. The catalysed reaction is Specificity close to that of papain. As compared to cathepsin B, cathepsin L exhibits higher activity toward protein substrates, but has little activity on Z-Arg-Arg-NHMec, and no peptidyl-dipeptidase activity.. Long isoform of CD74/Ii chain stabilizes the conformation of mature CTSL by binding to its active site and serving as a chaperone to help maintain a pool of mature enzyme in endocytic compartments and extracellular space of APCs. IFNG enhances the conversion into the CTSL mature and active form. Inhibited by CST6. Inhibited by the glycopeptide antibiotic teicoplanin. Inhibited by amantadine. Its function is as follows. Thiol protease important for the overall degradation of proteins in lysosomes. Involved in the solubilization of cross-linked TG/thyroglobulin and in the subsequent release of thyroid hormone thyroxine (T4) by limited proteolysis of TG/thyroglobulin in the thyroid follicle lumen. In neuroendocrine chromaffin cells secretory vesicles, catalyzes the prohormone proenkephalin processing to the active enkephalin peptide neurotransmitter. In thymus, regulates CD4(+) T cell positive selection by generating the major histocompatibility complex class II (MHCII) bound peptide ligands presented by cortical thymic epithelial cells. Also mediates invariant chain processing in cortical thymic epithelial cells. Major elastin-degrading enzyme at neutral pH. Accumulates as a mature and active enzyme in the extracellular space of antigen presenting cells (APCs) to regulate degradation of the extracellular matrix in the course of inflammation. Secreted form generates endostatin from COL18A1. Critical for cardiac morphology and function. Plays an important role in hair follicle morphogenesis and cycling, as well as epidermal differentiation. Required for maximal stimulation of steroidogenesis by TIMP1. This Mus musculus (Mouse) protein is Procathepsin L.